Here is a 435-residue protein sequence, read N- to C-terminus: Mitochondrial distribution and morphology protein 12 (435 aa).

An SMP-LTD domain is found at 1–435 (MSIEVDWGAA…VYPSFWTFLV (435 aa)). Disordered regions lie at residues 73 to 113 (DEDD…AINH) and 186 to 268 (WNDS…TSEE). Residues 96–113 (THPELNESSFRDDNAINH) are compositionally biased toward basic and acidic residues. Low complexity predominate over residues 218–238 (SSNPTSRPSTSSTLPSHPSGS). Residues 251–268 (HGSHPEEHGHLDDPTSEE) are compositionally biased toward basic and acidic residues.

It belongs to the MDM12 family. As to quaternary structure, component of the ER-mitochondria encounter structure (ERMES) or MDM complex, composed of mmm1, mdm10, mdm12 and mdm34. A mmm1 homodimer associates with one molecule of mdm12 on each side in a pairwise head-to-tail manner, and the SMP-LTD domains of mmm1 and mdm12 generate a continuous hydrophobic tunnel for phospholipid trafficking.

It is found in the mitochondrion outer membrane. Its subcellular location is the endoplasmic reticulum membrane. Functionally, component of the ERMES/MDM complex, which serves as a molecular tether to connect the endoplasmic reticulum (ER) and mitochondria. Components of this complex are involved in the control of mitochondrial shape and protein biogenesis, and function in nonvesicular lipid trafficking between the ER and mitochondria. Mdm12 is required for the interaction of the ER-resident membrane protein mmm1 and the outer mitochondrial membrane-resident beta-barrel protein mdm10. The mdm12-mmm1 subcomplex functions in the major beta-barrel assembly pathway that is responsible for biogenesis of all mitochondrial outer membrane beta-barrel proteins, and acts in a late step after the SAM complex. The mdm10-mdm12-mmm1 subcomplex further acts in the TOM40-specific pathway after the action of the mdm12-mmm1 complex. Essential for establishing and maintaining the structure of mitochondria and maintenance of mtDNA nucleoids. The chain is Mitochondrial distribution and morphology protein 12 from Aspergillus niger (strain ATCC MYA-4892 / CBS 513.88 / FGSC A1513).